The primary structure comprises 585 residues: uncharacterized protein (585 aa).

Positions 1-18 (MSALSTKLEPTNSYSESL) are enriched in polar residues. The interval 1–23 (MSALSTKLEPTNSYSESLPPQRR) is disordered.

The protein belongs to the protein kinase superfamily. ADCK protein kinase family.

This is an uncharacterized protein from Synechocystis sp. (strain ATCC 27184 / PCC 6803 / Kazusa).